The chain runs to 429 residues: Ribosomal RNA small subunit methyltransferase B (429 aa).

S-adenosyl-L-methionine is bound by residues 254–260 (CAAPGGK), Asp277, Asp303, and Asp322. Cys375 serves as the catalytic Nucleophile.

It belongs to the class I-like SAM-binding methyltransferase superfamily. RsmB/NOP family.

The protein resides in the cytoplasm. The enzyme catalyses cytidine(967) in 16S rRNA + S-adenosyl-L-methionine = 5-methylcytidine(967) in 16S rRNA + S-adenosyl-L-homocysteine + H(+). In terms of biological role, specifically methylates the cytosine at position 967 (m5C967) of 16S rRNA. This chain is Ribosomal RNA small subunit methyltransferase B, found in Erwinia tasmaniensis (strain DSM 17950 / CFBP 7177 / CIP 109463 / NCPPB 4357 / Et1/99).